The sequence spans 442 residues: ATP-dependent protease ATPase subunit HslU (442 aa).

ATP contacts are provided by residues Ile-18 and 60–65; that span reads GVGKTE. Residues 133-156 form a disordered region; sequence DALLPKPKNDWDNTDSDTSSNTRQ. Residues Asp-255, Glu-320, and Arg-392 each coordinate ATP.

This sequence belongs to the ClpX chaperone family. HslU subfamily. In terms of assembly, a double ring-shaped homohexamer of HslV is capped on each side by a ring-shaped HslU homohexamer. The assembly of the HslU/HslV complex is dependent on binding of ATP.

The protein localises to the cytoplasm. Functionally, ATPase subunit of a proteasome-like degradation complex; this subunit has chaperone activity. The binding of ATP and its subsequent hydrolysis by HslU are essential for unfolding of protein substrates subsequently hydrolyzed by HslV. HslU recognizes the N-terminal part of its protein substrates and unfolds these before they are guided to HslV for hydrolysis. This Shewanella sp. (strain ANA-3) protein is ATP-dependent protease ATPase subunit HslU.